Consider the following 284-residue polypeptide: 4-diphosphocytidyl-2-C-methyl-D-erythritol kinase (284 aa).

The active site involves Lys-14. 97 to 107 (PMGGGVGGGSS) serves as a coordination point for ATP. Asp-139 is a catalytic residue.

This sequence belongs to the GHMP kinase family. IspE subfamily.

It carries out the reaction 4-CDP-2-C-methyl-D-erythritol + ATP = 4-CDP-2-C-methyl-D-erythritol 2-phosphate + ADP + H(+). Its pathway is isoprenoid biosynthesis; isopentenyl diphosphate biosynthesis via DXP pathway; isopentenyl diphosphate from 1-deoxy-D-xylulose 5-phosphate: step 3/6. Functionally, catalyzes the phosphorylation of the position 2 hydroxy group of 4-diphosphocytidyl-2C-methyl-D-erythritol. The polypeptide is 4-diphosphocytidyl-2-C-methyl-D-erythritol kinase (Pseudoalteromonas translucida (strain TAC 125)).